The chain runs to 600 residues: uncharacterized protein (600 aa).

2 consecutive 4Fe-4S ferredoxin-type domains span residues 14–44 (RLAIIDYDRCQPKKCSMECMKYCPGVRMGEK) and 53–82 (GKPVISEVLCSGCGICVKRCPFKAISIIGL). ABC transporter domains follow at residues 77-318 (ISII…YLYG) and 348-563 (LLSY…LKEM). ATP is bound by residues 117–124 (GQNGIGKS) and 380–387 (GPNGIGKT). Over residues 569 to 594 (RDPETGRPRANKEGSQRDIMQKEKGE) the composition is skewed to basic and acidic residues. Positions 569–600 (RDPETGRPRANKEGSQRDIMQKEKGEYYYVDE) are disordered.

Belongs to the ABC transporter superfamily.

This is an uncharacterized protein from Methanocaldococcus jannaschii (strain ATCC 43067 / DSM 2661 / JAL-1 / JCM 10045 / NBRC 100440) (Methanococcus jannaschii).